The primary structure comprises 150 residues: Small ribosomal subunit protein uS7cz/uS7cy (150 aa).

Belongs to the universal ribosomal protein uS7 family. As to quaternary structure, part of the 30S ribosomal subunit.

It localises to the plastid. Its subcellular location is the chloroplast. Functionally, one of the primary rRNA binding proteins, it binds directly to 16S rRNA where it nucleates assembly of the head domain of the 30S subunit. The sequence is that of Small ribosomal subunit protein uS7cz/uS7cy (rps7-A) from Adiantum capillus-veneris (Maidenhair fern).